The following is a 727-amino-acid chain: Iron-sulfur clusters transporter atm1, mitochondrial (727 aa).

The disordered stretch occupies residues 46–97 (NSPLRKDASKEPALASNSKTTNPIPTQASASVNPPKDARNATTAKKDLLSET). Positions 60 to 77 (ASNSKTTNPIPTQASASV) are enriched in polar residues. The span at 81–94 (KDARNATTAKKDLL) shows a compositional bias: basic and acidic residues. Residues 131 to 152 (VGTALSLLVGAKILNVEVPFYF) traverse the membrane as a helical segment. Positions 131–421 (VGTALSLLVG…LGSVYRELRQ (291 aa)) constitute an ABC transmembrane type-1 domain. Residues 153–175 (KSIVDSMNIDFATVGGTAYTVAG) are Mitochondrial intermembrane-facing. Residues 176-199 (SMIIAYGVTRIGATLFQELRNAVF) traverse the membrane as a helical segment. The Mitochondrial matrix segment spans residues 200–248 (ASVAQKAIRRVARNVFEHLLRLDLNFHLSRQTGGLTRAIDRGTKGISFL). Residues 249 to 272 (LTSMVFHVVPTALEISLVCGILTY) form a helical membrane-spanning segment. A topological domain (mitochondrial intermembrane) is located at residue glutamine 273. Residues 274–294 (YGFQFAAITAATMVAYTAFTI) traverse the membrane as a helical segment. Residues 295-360 (TTTAWRTKFR…ASIKVTTSLA (66 aa)) are Mitochondrial matrix-facing. Residues 300–304 (RTKFR) and 363–366 (NSGQ) each bind glutathione. A helical transmembrane segment spans residues 361-379 (FLNSGQNMIFSSALAAMMY). Residues 380–394 (LAANGVANGNLTVGD) lie on the Mitochondrial intermembrane side of the membrane. Residues 395 to 416 (LVMVNQLVFQLSVPLNFLGSVY) form a helical membrane-spanning segment. Glycine 413 is a binding site for glutathione. Residues 417–727 (RELRQSLLDM…DMAPGPKAQQ (311 aa)) lie on the Mitochondrial matrix side of the membrane. Residues 456–692 (IRFENVTFGY…NGIYAELWNA (237 aa)) enclose the ABC transporter domain. Residues tyrosine 465 and 489 to 500 (GPSGCGKSTILR) contribute to the ATP site. The segment covering 702–719 (EFERETERDDVESKERDM) has biased composition (basic and acidic residues). The tract at residues 702–727 (EFERETERDDVESKERDMAPGPKAQQ) is disordered.

The protein belongs to the ABC transporter superfamily. ABCB family. Heavy Metal importer (TC 3.A.1.210) subfamily. Homodimer.

It is found in the mitochondrion inner membrane. Functionally, performs an essential function in the generation of cytoplasmic iron-sulfur proteins by mediating the ATP-dependent export of Fe/S cluster precursors synthesized by nfs1 and other mitochondrial proteins. Hydrolyzes ATP. Binds glutathione and may function by transporting a glutathione-conjugated iron-sulfur compound. This chain is Iron-sulfur clusters transporter atm1, mitochondrial, found in Aspergillus fumigatus (strain ATCC MYA-4609 / CBS 101355 / FGSC A1100 / Af293) (Neosartorya fumigata).